The primary structure comprises 1377 residues: Temperature-sensitive hemagglutinin tsh autotransporter (1377 aa).

The N-terminal stretch at 1-52 (MNRIYSLRYSAVARGFIAVSEFARKCVHKSVRRLCFPVLLLIPVLFSAGSLA) is a signal peptide. The region spanning 53–302 (GTVNNELGYQ…AVIPLDFIGQ (250 aa)) is the Peptidase S6 domain. Residues His125, Asp153, and Ser259 each act as charge relay system in the active site. Positions 1111–1377 (DINGEAGTWV…AINANIRYSF (267 aa)) constitute an Autotransporter domain.

Post-translationally, the C-terminus is blocked. In terms of processing, cleaved to release the mature protein from the outer membrane.

The protein localises to the periplasm. It localises to the secreted. The protein resides in the cell surface. It is found in the cell outer membrane. In terms of biological role, contributes to the development of lesions and deposition of fibrin in the avian air sacs. It can act both as an adhesin and as a serine protease. Agglutinates erythrocytes while in contact with the extracellular surface of the bacterial cells. Can adhere to purified hemoglobin and bind with great efficiency to extracellular matrix proteins. Cleaves casein and exhibits mucinolytic activity. The chain is Temperature-sensitive hemagglutinin tsh autotransporter (tsh) from Escherichia coli.